A 344-amino-acid polypeptide reads, in one-letter code: UPF0283 membrane protein YcjF (344 aa).

The next 3 helical transmembrane spans lie at 70–90, 100–120, and 213–233; these read MVMGGLALFGASVVGQGVQWT, VALGGCAAGALIIGAGVGSVV, and ESTLMIAVSPLALVDMAFIAW.

This sequence belongs to the UPF0283 family.

It localises to the cell inner membrane. The polypeptide is UPF0283 membrane protein YcjF (Shigella dysenteriae serotype 1 (strain Sd197)).